Here is a 208-residue protein sequence, read N- to C-terminus: Urease accessory protein UreG (208 aa).

10–17 is a binding site for GTP; it reads GPVGSGKT.

Belongs to the SIMIBI class G3E GTPase family. UreG subfamily. As to quaternary structure, homodimer. UreD, UreF and UreG form a complex that acts as a GTP-hydrolysis-dependent molecular chaperone, activating the urease apoprotein by helping to assemble the nickel containing metallocenter of UreC. The UreE protein probably delivers the nickel.

It is found in the cytoplasm. Its function is as follows. Facilitates the functional incorporation of the urease nickel metallocenter. This process requires GTP hydrolysis, probably effectuated by UreG. This chain is Urease accessory protein UreG, found in Halalkalibacterium halodurans (strain ATCC BAA-125 / DSM 18197 / FERM 7344 / JCM 9153 / C-125) (Bacillus halodurans).